The primary structure comprises 377 residues: Leukocyte elastase inhibitor (377 aa).

Methionine 1 bears the N-acetylmethionine mark. Lysine 136 carries the N6-acetyllysine modification. Residue serine 298 is modified to Phosphoserine. The interval 349 to 377 (EFVADHPFIFFIRHKPSSNILFLGRLSSP) is CARD-binding motif (CBM).

It belongs to the serpin family. Ov-serpin subfamily. In terms of assembly, monomer. Interacts (via C-terminus) with CASP1; CASP4 (via CARD domain) and CASP5; these interactions regulate the activity of inflammatory caspases. Interacts with PRTN3. Interacts with GZMH.

It is found in the secreted. The protein localises to the cytoplasm. Its subcellular location is the cytolytic granule. The protein resides in the early endosome. Its function is as follows. Neutrophil serine protease inhibitor that plays an essential role in the regulation of the innate immune response, inflammation and cellular homeostasis. Acts primarily to protect the cell from proteases released in the cytoplasm during stress or infection. These proteases are important in killing microbes but when released from granules, these potent enzymes also destroy host proteins and contribute to mortality. Regulates the activity of the neutrophil proteases elastase, cathepsin G, proteinase-3, chymase, chymotrypsin, and kallikrein-3. Also acts as a potent intracellular inhibitor of GZMH by directly blocking its proteolytic activity. During inflammation, limits the activity of inflammatory caspases CASP1, CASP4 and CASP5 by suppressing their caspase-recruitment domain (CARD) oligomerization and enzymatic activation. When secreted, promotes the proliferation of beta-cells via its protease inhibitory function. The chain is Leukocyte elastase inhibitor (SERPINB1) from Bos taurus (Bovine).